Here is an 872-residue protein sequence, read N- to C-terminus: Alanine--tRNA ligase (872 aa).

Residues His566, His570, Cys668, and His672 each contribute to the Zn(2+) site.

The protein belongs to the class-II aminoacyl-tRNA synthetase family. Requires Zn(2+) as cofactor.

The protein resides in the cytoplasm. It carries out the reaction tRNA(Ala) + L-alanine + ATP = L-alanyl-tRNA(Ala) + AMP + diphosphate. Functionally, catalyzes the attachment of alanine to tRNA(Ala) in a two-step reaction: alanine is first activated by ATP to form Ala-AMP and then transferred to the acceptor end of tRNA(Ala). Also edits incorrectly charged Ser-tRNA(Ala) and Gly-tRNA(Ala) via its editing domain. This chain is Alanine--tRNA ligase, found in Lactococcus lactis subsp. cremoris (strain SK11).